The sequence spans 275 residues: Bis(5'-nucleosyl)-tetraphosphatase, symmetrical (275 aa).

The protein belongs to the Ap4A hydrolase family.

The catalysed reaction is P(1),P(4)-bis(5'-adenosyl) tetraphosphate + H2O = 2 ADP + 2 H(+). Functionally, hydrolyzes diadenosine 5',5'''-P1,P4-tetraphosphate to yield ADP. This chain is Bis(5'-nucleosyl)-tetraphosphatase, symmetrical, found in Haemophilus influenzae (strain PittGG).